The following is a 156-amino-acid chain: Transcription antitermination protein NusB (156 aa).

It belongs to the NusB family.

In terms of biological role, involved in transcription antitermination. Required for transcription of ribosomal RNA (rRNA) genes. Binds specifically to the boxA antiterminator sequence of the ribosomal RNA (rrn) operons. This chain is Transcription antitermination protein NusB, found in Clostridium kluyveri (strain ATCC 8527 / DSM 555 / NBRC 12016 / NCIMB 10680 / K1).